Here is a 517-residue protein sequence, read N- to C-terminus: L-amino-acid oxidase (517 aa).

The signal sequence occupies residues M1–C18. A disulfide bond links C29 and C192. FAD-binding positions include M62–A63, E82–A83, R90, and G106–R109. R109 lines the substrate pocket. N-linked (GlcNAc...) asparagine glycosylation is present at N191. FAD is bound at residue V280. A disulfide bridge links C350 with C431. Y391 contacts substrate. Residues E476 and G483 to T488 contribute to the FAD site. A substrate-binding site is contributed by G483–W484.

It belongs to the flavin monoamine oxidase family. FIG1 subfamily. As to quaternary structure, homodimer; non-covalently linked. Requires FAD as cofactor. N-glycosylated. As to expression, expressed by the venom gland.

Its subcellular location is the secreted. The enzyme catalyses an L-alpha-amino acid + O2 + H2O = a 2-oxocarboxylate + H2O2 + NH4(+). Functionally, catalyzes an oxidative deamination of predominantly hydrophobic and aromatic L-amino acids, thus producing hydrogen peroxide that may contribute to the diverse toxic effects of this enzyme. Exhibits diverse biological activities, such as hemorrhage, hemolysis, edema, apoptosis of vascular endothelial cells or tumor cell lines, antiparasitic activities, as well as regulation of platelet aggregation. Effects of snake L-amino oxidases on platelets are controversial, since they either induce aggregation or inhibit agonist-induced aggregation. These different effects are probably due to different experimental conditions. This protein has antibacterial activities. This is L-amino-acid oxidase from Pseudechis australis (Mulga snake).